The sequence spans 413 residues: Multifunctional CCA protein (413 aa).

ATP contacts are provided by G8 and R11. CTP-binding residues include G8 and R11. Mg(2+) is bound by residues D21 and D23. ATP is bound by residues R91, R137, and R140. 3 residues coordinate CTP: R91, R137, and R140. The HD domain occupies 228–329; the sequence is TGIHTLMTLS…VKLFDNIDAW (102 aa).

This sequence belongs to the tRNA nucleotidyltransferase/poly(A) polymerase family. Bacterial CCA-adding enzyme type 1 subfamily. As to quaternary structure, monomer. Can also form homodimers and oligomers. Mg(2+) serves as cofactor. Ni(2+) is required as a cofactor.

The enzyme catalyses a tRNA precursor + 2 CTP + ATP = a tRNA with a 3' CCA end + 3 diphosphate. The catalysed reaction is a tRNA with a 3' CCA end + 2 CTP + ATP = a tRNA with a 3' CCACCA end + 3 diphosphate. Functionally, catalyzes the addition and repair of the essential 3'-terminal CCA sequence in tRNAs without using a nucleic acid template. Adds these three nucleotides in the order of C, C, and A to the tRNA nucleotide-73, using CTP and ATP as substrates and producing inorganic pyrophosphate. tRNA 3'-terminal CCA addition is required both for tRNA processing and repair. Also involved in tRNA surveillance by mediating tandem CCA addition to generate a CCACCA at the 3' terminus of unstable tRNAs. While stable tRNAs receive only 3'-terminal CCA, unstable tRNAs are marked with CCACCA and rapidly degraded. In Enterobacter sp. (strain 638), this protein is Multifunctional CCA protein.